Consider the following 156-residue polypeptide: Large ribosomal subunit protein eL24 (156 aa).

Residues 110–129 are compositionally biased toward basic and acidic residues; that stretch reads KESKAKKQETQAAKKAEKAK. The disordered stretch occupies residues 110–156; it reads KESKAKKQETQAAKKAEKAKNAANPKARVTSKQGAKGAPVKVAAKSR. Positions 130–156 are enriched in low complexity; sequence NAANPKARVTSKQGAKGAPVKVAAKSR.

This sequence belongs to the eukaryotic ribosomal protein eL24 family. Component of the large ribosomal subunit (LSU). Mature N.crassa ribosomes consist of a small (40S) and a large (60S) subunit. The 40S small subunit contains 1 molecule of ribosomal RNA (18S rRNA) and at least 32 different proteins. The large 60S subunit contains 3 rRNA molecules (26S, 5.8S and 5S rRNA) and at least 42 different proteins.

It is found in the cytoplasm. In terms of biological role, component of the ribosome, a large ribonucleoprotein complex responsible for the synthesis of proteins in the cell. The small ribosomal subunit (SSU) binds messenger RNAs (mRNAs) and translates the encoded message by selecting cognate aminoacyl-transfer RNA (tRNA) molecules. The large subunit (LSU) contains the ribosomal catalytic site termed the peptidyl transferase center (PTC), which catalyzes the formation of peptide bonds, thereby polymerizing the amino acids delivered by tRNAs into a polypeptide chain. The nascent polypeptides leave the ribosome through a tunnel in the LSU and interact with protein factors that function in enzymatic processing, targeting, and the membrane insertion of nascent chains at the exit of the ribosomal tunnel. The polypeptide is Large ribosomal subunit protein eL24 (rpl-24) (Neurospora crassa (strain ATCC 24698 / 74-OR23-1A / CBS 708.71 / DSM 1257 / FGSC 987)).